The following is a 301-amino-acid chain: Mitochondrial substrate carrier family protein X (301 aa).

Residues methionine 1–asparagine 23 lie on the Mitochondrial intermembrane side of the membrane. Solcar repeat units follow at residues proline 18 to arginine 109, isoleucine 117 to asparagine 199, and isoleucine 208 to phenylalanine 296. The helical transmembrane segment at leucine 24–valine 44 threads the bilayer. Residues lysine 45–glutamate 75 are Mitochondrial matrix-facing. Residues glycine 76–alanine 97 traverse the membrane as a helical segment. Topologically, residues leucine 98 to glutamate 122 are mitochondrial intermembrane. Residues valine 123–valine 143 traverse the membrane as a helical segment. Over lysine 144–lysine 173 the chain is Mitochondrial matrix. Residues glycine 174–glycine 194 form a helical membrane-spanning segment. Topologically, residues arginine 195–glutamate 207 are mitochondrial intermembrane. Residues isoleucine 208–serine 228 form a helical membrane-spanning segment. Topologically, residues threonine 229 to glycine 271 are mitochondrial matrix. Residues valine 272–isoleucine 292 traverse the membrane as a helical segment. Topologically, residues glutamine 293–histidine 301 are mitochondrial intermembrane.

It belongs to the mitochondrial carrier (TC 2.A.29) family.

The protein resides in the mitochondrion inner membrane. Mitochondrial solute carriers shuttle metabolites, nucleotides, and cofactors through the mitochondrial inner membrane. The sequence is that of Mitochondrial substrate carrier family protein X (mcfX) from Dictyostelium discoideum (Social amoeba).